The primary structure comprises 115 residues: Large ribosomal subunit protein bL19 (115 aa).

This sequence belongs to the bacterial ribosomal protein bL19 family.

Functionally, this protein is located at the 30S-50S ribosomal subunit interface and may play a role in the structure and function of the aminoacyl-tRNA binding site. This is Large ribosomal subunit protein bL19 from Koribacter versatilis (strain Ellin345).